We begin with the raw amino-acid sequence, 443 residues long: Adenylyltransferase and sulfurtransferase UBA4 (443 aa).

ATP-binding positions include G83, D104, 111-115, K128, and 172-173; these read SNLHR and DT. Positions 214 and 217 each coordinate Zn(2+). C231 serves as the catalytic Glycyl thioester intermediate; for adenylyltransferase activity. Zn(2+) contacts are provided by C292 and C295. The Rhodanese domain occupies 343 to 441; it reads QSKAPVLLDV…WSDIVNPKFP (99 aa). Catalysis depends on C400, which acts as the Cysteine persulfide intermediate; for sulfurtransferase activity.

The protein in the N-terminal section; belongs to the HesA/MoeB/ThiF family. UBA4 subfamily. Requires Zn(2+) as cofactor.

It is found in the cytoplasm. The protein resides in the cytosol. It functions in the pathway tRNA modification; 5-methoxycarbonylmethyl-2-thiouridine-tRNA biosynthesis. Its function is as follows. Plays a central role in 2-thiolation of mcm(5)S(2)U at tRNA wobble positions of cytosolic tRNA(Lys), tRNA(Glu) and tRNA(Gln). Acts by mediating the C-terminal thiocarboxylation of sulfur carrier URM1. Its N-terminus first activates URM1 as acyl-adenylate (-COAMP), then the persulfide sulfur on the catalytic cysteine is transferred to URM1 to form thiocarboxylation (-COSH) of its C-terminus. The reaction probably involves hydrogen sulfide that is generated from the persulfide intermediate and that acts as a nucleophile towards URM1. Subsequently, a transient disulfide bond is formed. Does not use thiosulfate as sulfur donor; NFS1 probably acting as a sulfur donor for thiocarboxylation reactions. Prior mcm(5) tRNA modification by the elongator complex is required for 2-thiolation. May also be involved in protein urmylation. The chain is Adenylyltransferase and sulfurtransferase UBA4 from Scheffersomyces stipitis (strain ATCC 58785 / CBS 6054 / NBRC 10063 / NRRL Y-11545) (Yeast).